The following is a 420-amino-acid chain: Gamma-glutamyl phosphate reductase (420 aa).

This sequence belongs to the gamma-glutamyl phosphate reductase family.

Its subcellular location is the cytoplasm. The enzyme catalyses L-glutamate 5-semialdehyde + phosphate + NADP(+) = L-glutamyl 5-phosphate + NADPH + H(+). The protein operates within amino-acid biosynthesis; L-proline biosynthesis; L-glutamate 5-semialdehyde from L-glutamate: step 2/2. In terms of biological role, catalyzes the NADPH-dependent reduction of L-glutamate 5-phosphate into L-glutamate 5-semialdehyde and phosphate. The product spontaneously undergoes cyclization to form 1-pyrroline-5-carboxylate. This is Gamma-glutamyl phosphate reductase from Streptococcus gordonii (strain Challis / ATCC 35105 / BCRC 15272 / CH1 / DL1 / V288).